Here is a 217-residue protein sequence, read N- to C-terminus: Adenylate kinase (217 aa).

Residue G11 to T16 coordinates ATP. Positions S31 to V61 are NMP. AMP-binding positions include T32, R37, D59 to V61, G87 to R90, and Q94. Residues G124 to D161 are LID. ATP is bound by residues R125 and T134 to Y135. AMP-binding residues include R158 and R169. R202 lines the ATP pocket.

This sequence belongs to the adenylate kinase family. As to quaternary structure, monomer.

It localises to the cytoplasm. It catalyses the reaction AMP + ATP = 2 ADP. It functions in the pathway purine metabolism; AMP biosynthesis via salvage pathway; AMP from ADP: step 1/1. Catalyzes the reversible transfer of the terminal phosphate group between ATP and AMP. Plays an important role in cellular energy homeostasis and in adenine nucleotide metabolism. This Blochmanniella pennsylvanica (strain BPEN) protein is Adenylate kinase.